Reading from the N-terminus, the 1011-residue chain is Histone deacetylase 9 (1011 aa).

S22 carries the post-translational modification Phosphoserine. Positions P23–R27 are interaction with CTBP1. Disordered regions lie at residues R110 to A139, T183 to N249, and T262 to V304. Positions R136–K154 are interaction with MEF2. The interaction with MAPK10 stretch occupies residues L175 to A343. Over residues L185–Y199 the composition is skewed to polar residues. The span at D208–A219 shows a compositional bias: basic and acidic residues. The interaction with ETV6 stretch occupies residues T218–V261. S220 and S240 each carry phosphoserine. The segment covering K233 to G248 has biased composition (basic and acidic residues). The segment covering T262–S285 has biased composition (low complexity). Residue S451 is modified to Phosphoserine. The segment at Q494–D536 is disordered. A compositionally biased stretch (polar residues) spans S522–S532. S554 is modified (phosphoserine). A histone deacetylase region spans residues S631–E978. 4 residues coordinate Zn(2+): C646, C648, H654, and C731. The active site involves H783.

This sequence belongs to the histone deacetylase family. HD type 2 subfamily. As to quaternary structure, homodimer. Interacts with CTBP1. The phosphorylated form interacts with 14-3-3. Interacts with HDAC1 and HDAC3, and probably with HDAC4 and HDAC5. Interacts with MEF2, MAPK10, ETV6, NCOR1 and BCL6. Interacts with FOXP3 in the absence of T-cell stimulation. Post-translationally, phosphorylated on Ser-220 and Ser-450; which promotes 14-3-3-binding, impairs interaction with MEF2, and antagonizes antimyogenic activity. Phosphorylated on Ser-240; which impairs nuclear accumulation. Isoform 7 is phosphorylated on Tyr-1010. Phosphorylated by the PKC kinases PKN1 and PKN2, impairing nuclear import. In terms of processing, sumoylated. As to expression, broadly expressed, with highest levels in brain, heart, muscle and testis. Isoform 3 is present in human bladder carcinoma cells (at protein level).

It localises to the nucleus. The enzyme catalyses N(6)-acetyl-L-lysyl-[histone] + H2O = L-lysyl-[histone] + acetate. Inhibited by Trichostatin A (TSA) and suberoylanilide hydroxamic acid. In terms of biological role, responsible for the deacetylation of lysine residues on the N-terminal part of the core histones (H2A, H2B, H3 and H4). Histone deacetylation gives a tag for epigenetic repression and plays an important role in transcriptional regulation, cell cycle progression and developmental events. Represses MEF2-dependent transcription. Its function is as follows. Isoform 3 lacks active site residues and therefore is catalytically inactive. Represses MEF2-dependent transcription by recruiting HDAC1 and/or HDAC3. Seems to inhibit skeletal myogenesis and to be involved in heart development. Protects neurons from apoptosis, both by inhibiting JUN phosphorylation by MAPK10 and by repressing JUN transcription via HDAC1 recruitment to JUN promoter. This is Histone deacetylase 9 (HDAC9) from Homo sapiens (Human).